The following is a 234-amino-acid chain: MTKIAMANFKSAMPIFKSHAYLEELEKTLKPQHFDRVFVFPDFLGLLPNSFLHFTLGAQNAYPKDCGAFTGEITSQHLEELKINTLLIGHSERRLLLKESPSFLKEKFDFFKSKNFKIVYCIGEELTTREKGFKAVKEFLNEQLENIDLNYPNLVVAYEPIWAIGTKKSASLEDIYLTHGFLKQILNQKTPLLYGGSVNAQNAKEILGIDSVDGLLIGSASLELENFKTIISFL.

Substrate is bound at residue 8–10; the sequence is NFK. Residue His-90 is the Electrophile of the active site. Glu-159 (proton acceptor) is an active-site residue. 2 residues coordinate substrate: Gly-165 and Ser-197.

Belongs to the triosephosphate isomerase family. As to quaternary structure, homodimer.

The protein localises to the cytoplasm. The enzyme catalyses D-glyceraldehyde 3-phosphate = dihydroxyacetone phosphate. It participates in carbohydrate biosynthesis; gluconeogenesis. Its pathway is carbohydrate degradation; glycolysis; D-glyceraldehyde 3-phosphate from glycerone phosphate: step 1/1. Involved in the gluconeogenesis. Catalyzes stereospecifically the conversion of dihydroxyacetone phosphate (DHAP) to D-glyceraldehyde-3-phosphate (G3P). The polypeptide is Triosephosphate isomerase (Helicobacter pylori (strain Shi470)).